Consider the following 439-residue polypeptide: Glutamate--tRNA ligase 1 (439 aa).

The short motif at 6-16 (PSPTGDMHIGN) is the 'HIGH' region element. Residues 232–236 (KMSKR) carry the 'KMSKS' region motif. Position 235 (K235) interacts with ATP.

It belongs to the class-I aminoacyl-tRNA synthetase family. Glutamate--tRNA ligase type 1 subfamily. In terms of assembly, monomer.

Its subcellular location is the cytoplasm. It carries out the reaction tRNA(Glu) + L-glutamate + ATP = L-glutamyl-tRNA(Glu) + AMP + diphosphate. In terms of biological role, catalyzes the attachment of glutamate to tRNA(Glu) in a two-step reaction: glutamate is first activated by ATP to form Glu-AMP and then transferred to the acceptor end of tRNA(Glu). The polypeptide is Glutamate--tRNA ligase 1 (Helicobacter acinonychis (strain Sheeba)).